The chain runs to 413 residues: Docking protein 2 (413 aa).

In terms of domain architecture, PH spans 4–114 (VVVKQGFLYL…WIQAICLLAF (111 aa)). In terms of domain architecture, IRS-type PTB spans 147 to 252 (PQKEFAVTVR…SAQKNAAPPG (106 aa)). Positions 247 to 292 (NAAPPGPQTQPVPVPAVLPRPESPYARPHDSLPPPSPTVPVPTPRQ) are disordered. A compositionally biased stretch (pro residues) spans 250–268 (PPGPQTQPVPVPAVLPRPE). Tyr-271 bears the Phosphotyrosine mark. Over residues 277–289 (SLPPPSPTVPVPT) the composition is skewed to pro residues. Tyr-300 and Tyr-346 each carry phosphotyrosine. Residues 362–381 (QEPRGEAWRRQATADRDSSG) are compositionally biased toward basic and acidic residues. The interval 362-383 (QEPRGEAWRRQATADRDSSGLK) is disordered.

The protein belongs to the DOK family. Type A subfamily. In terms of assembly, interacts with phosphorylated RASGAP and EGFR. Interacts with RET and NCK. Interacts (via PH domain) with TEK/TIE2 (tyrosine phosphorylated). On immunoreceptor stimulation, phosphorylated on C-terminal tyrosine residues. Phosphorylation on Tyr-346 is required for binding to the SH2 domain of NCK. Phosphorylation on both Tyr-271 and Tyr-300 is required for interaction with RASGAP. Phosphorylated on tyrosine residues by TEK/TIE2.

Functionally, DOK proteins are enzymatically inert adaptor or scaffolding proteins. They provide a docking platform for the assembly of multimolecular signaling complexes. DOK2 may modulate the cellular proliferation induced by IL-4, as well as IL-2 and IL-3. May be involved in modulating Bcr-Abl signaling. Attenuates EGF-stimulated MAP kinase activation. This is Docking protein 2 (DOK2) from Bos taurus (Bovine).